The chain runs to 166 residues: Large ribosomal subunit protein uL10 (166 aa).

Belongs to the universal ribosomal protein uL10 family. As to quaternary structure, part of the ribosomal stalk of the 50S ribosomal subunit. The N-terminus interacts with L11 and the large rRNA to form the base of the stalk. The C-terminus forms an elongated spine to which L12 dimers bind in a sequential fashion forming a multimeric L10(L12)X complex.

In terms of biological role, forms part of the ribosomal stalk, playing a central role in the interaction of the ribosome with GTP-bound translation factors. The polypeptide is Large ribosomal subunit protein uL10 (Flavobacterium psychrophilum (strain ATCC 49511 / DSM 21280 / CIP 103535 / JIP02/86)).